The following is a 150-amino-acid chain: Arginine repressor (150 aa).

It belongs to the ArgR family.

The protein localises to the cytoplasm. It functions in the pathway amino-acid biosynthesis; L-arginine biosynthesis [regulation]. Regulates arginine biosynthesis genes. This Staphylococcus haemolyticus (strain JCSC1435) protein is Arginine repressor.